A 135-amino-acid chain; its full sequence is Beta-galactoside-binding lectin (135 aa).

Serine 2 is subject to N-acetylserine. Cysteine 3 and cysteine 8 form a disulfide bridge. The 131-residue stretch at 5–135 (GPVCTNLGLK…DFTLRSVSWE (131 aa)) folds into the Galectin domain. A beta-D-galactoside contacts are provided by residues 46–50 (HFNPR), histidine 54, asparagine 63, 70–73 (WGTE), and 70–76 (WGTEQRE).

In terms of assembly, homodimer; disulfide-linked. As to quaternary structure, (Microbial infection) Interacts with newcastle disease virus protein HN; this interaction inhibits viral adsorption rather than internalization. As to expression, mainly in the intestine (adult), mainly in the skin (embryo).

In terms of biological role, this protein binds beta-galactoside. May participate in host antiviral defense through specific interaction with glycans on the viral envelope glycoproteins. In Gallus gallus (Chicken), this protein is Beta-galactoside-binding lectin (CG-1B).